The sequence spans 503 residues: MVLEMLNPMHYKVTSMVSEVVPFASIAVLLLTGFLLLVWNYKNTSSIPGPGYFLGIGPLISYLRFLWMGIGSACNYYNKTYGEFIRVWIGGEETLIISKSSSVFHVMKHSHYTSRFGSKPGLQFIGMHEKGIIFNNNPVLWKAVRTYFMKALSGPGLVRMVTVCADSITKHLDKLEEVRNDLGYVDVLTLMRRIMLDTSNNLFLGIPLDEKAIVCKIQGYFDAWQALLLKPDIFFKIPWLYRKYEKSVKDLKEDMEILIEKKRRRIFTAEKLEDCMDFATELILAEKRGELTKENVNQCILEMLIAAPDTMSVTVFFMLFLIAKHPQVEEELMKEIQTVVGERDIRNDDMQKLEVVENFIYESMRYQPVVDLVMRKALEDDVIDGYPVKKGTNIILNIGRMHRLEFFPKPNEFTLENFAKNVPYRYFQPFGFGPRACAGKYIAMVMMKVTLVILLRRFQVQTPQDRCVEKMQKKNDLSLHPDETSGLLEMIFIPRNSDKCFTK.

Position 437 (cysteine 437) interacts with heme.

Belongs to the cytochrome P450 family. Requires heme as cofactor.

The protein resides in the membrane. It carries out the reaction testosterone + 3 reduced [NADPH--hemoprotein reductase] + 3 O2 = 17beta-estradiol + formate + 3 oxidized [NADPH--hemoprotein reductase] + 4 H2O + 4 H(+). It catalyses the reaction androst-4-ene-3,17-dione + 3 reduced [NADPH--hemoprotein reductase] + 3 O2 = estrone + formate + 3 oxidized [NADPH--hemoprotein reductase] + 4 H2O + 4 H(+). Catalyzes the formation of aromatic C18 estrogens from C19 androgens. The sequence is that of Aromatase 1 (CYP19A1) from Sus scrofa (Pig).